A 1070-amino-acid chain; its full sequence is DNA-directed RNA polymerase subunit beta (1070 aa).

Belongs to the RNA polymerase beta chain family. In terms of assembly, in plastids the minimal PEP RNA polymerase catalytic core is composed of four subunits: alpha, beta, beta', and beta''. When a (nuclear-encoded) sigma factor is associated with the core the holoenzyme is formed, which can initiate transcription.

It localises to the plastid. It is found in the chloroplast. It carries out the reaction RNA(n) + a ribonucleoside 5'-triphosphate = RNA(n+1) + diphosphate. Its function is as follows. DNA-dependent RNA polymerase catalyzes the transcription of DNA into RNA using the four ribonucleoside triphosphates as substrates. This Chaetosphaeridium globosum (Charophycean green alga) protein is DNA-directed RNA polymerase subunit beta.